Here is an 82-residue protein sequence, read N- to C-terminus: Sulfur carrier protein TusA (82 aa).

The active-site Cysteine persulfide intermediate is C19.

It belongs to the sulfur carrier protein TusA family.

It localises to the cytoplasm. Functionally, sulfur carrier protein which probably makes part of a sulfur-relay system. This is Sulfur carrier protein TusA from Vibrio parahaemolyticus serotype O3:K6 (strain RIMD 2210633).